A 224-amino-acid chain; its full sequence is Cytidylate kinase (224 aa).

ATP is bound at residue Gly-11–Thr-19.

It belongs to the cytidylate kinase family. Type 1 subfamily.

Its subcellular location is the cytoplasm. The enzyme catalyses CMP + ATP = CDP + ADP. It carries out the reaction dCMP + ATP = dCDP + ADP. This is Cytidylate kinase from Geobacillus kaustophilus (strain HTA426).